The following is a 140-amino-acid chain: UPF0251 protein Athe_2281 (140 aa).

The protein belongs to the UPF0251 family.

The polypeptide is UPF0251 protein Athe_2281 (Caldicellulosiruptor bescii (strain ATCC BAA-1888 / DSM 6725 / KCTC 15123 / Z-1320) (Anaerocellum thermophilum)).